Reading from the N-terminus, the 510-residue chain is Lysine--tRNA ligase (510 aa).

Mg(2+) contacts are provided by Glu420 and Glu427.

It belongs to the class-II aminoacyl-tRNA synthetase family. Homodimer. The cofactor is Mg(2+).

It localises to the cytoplasm. The enzyme catalyses tRNA(Lys) + L-lysine + ATP = L-lysyl-tRNA(Lys) + AMP + diphosphate. The chain is Lysine--tRNA ligase from Psychrobacter sp. (strain PRwf-1).